The sequence spans 490 residues: Katanin p60 ATPase-containing subunit A-like 1 (490 aa).

Met-1 bears the N-acetylmethionine mark. The tract at residues 95 to 184 (DPAVWPPPVP…DGEMPKFDGA (90 aa)) is disordered. The segment covering 116–127 (PNREVRPLRKEM) has biased composition (basic and acidic residues). The span at 128–139 (AGVGARGPVGRA) shows a compositional bias: low complexity. Basic and acidic residues predominate over residues 143 to 169 (SKSEKPSTSRDKDYRARGRDDKGRKNM). Ser-174 carries the post-translational modification Phosphoserine. 248 to 255 (GPPGTGKT) serves as a coordination point for ATP.

Belongs to the AAA ATPase family. Katanin p60 subunit A1 subfamily. A-like 1 sub-subfamily. Interacts with KATNB1 and KATNBL1. In terms of tissue distribution, expressed in testis, restricted to Sertoli cells (at protein level).

The protein localises to the cytoplasm. Its subcellular location is the cytoskeleton. It is found in the spindle pole. It localises to the spindle. The enzyme catalyses n ATP + n H2O + a microtubule = n ADP + n phosphate + (n+1) alpha/beta tubulin heterodimers.. In terms of biological role, regulates microtubule dynamics in Sertoli cells, a process that is essential for spermiogenesis and male fertility. Severs microtubules in an ATP-dependent manner, promoting rapid reorganization of cellular microtubule arrays. Has microtubule-severing activity in vitro. In Homo sapiens (Human), this protein is Katanin p60 ATPase-containing subunit A-like 1.